The following is a 184-amino-acid chain: Large ribosomal subunit protein uL22A (184 aa).

Residue Lys46 forms a Glycyl lysine isopeptide (Lys-Gly) (interchain with G-Cter in ubiquitin) linkage. Thr70 is modified (phosphothreonine).

It belongs to the universal ribosomal protein uL22 family. Component of the large ribosomal subunit (LSU). Mature yeast ribosomes consist of a small (40S) and a large (60S) subunit. The 40S small subunit contains 1 molecule of ribosomal RNA (18S rRNA) and 33 different proteins (encoded by 57 genes). The large 60S subunit contains 3 rRNA molecules (25S, 5.8S and 5S rRNA) and 46 different proteins (encoded by 81 genes). uL22 is associated with the polypeptide exit tunnel.

The protein resides in the cytoplasm. In terms of biological role, component of the ribosome, a large ribonucleoprotein complex responsible for the synthesis of proteins in the cell. The small ribosomal subunit (SSU) binds messenger RNAs (mRNAs) and translates the encoded message by selecting cognate aminoacyl-transfer RNA (tRNA) molecules. The large subunit (LSU) contains the ribosomal catalytic site termed the peptidyl transferase center (PTC), which catalyzes the formation of peptide bonds, thereby polymerizing the amino acids delivered by tRNAs into a polypeptide chain. The nascent polypeptides leave the ribosome through a tunnel in the LSU and interact with protein factors that function in enzymatic processing, targeting, and the membrane insertion of nascent chains at the exit of the ribosomal tunnel. This chain is Large ribosomal subunit protein uL22A, found in Saccharomyces cerevisiae (strain ATCC 204508 / S288c) (Baker's yeast).